A 197-amino-acid chain; its full sequence is MSSAVSASPQAASPQQDRTSGLSARYARALYELADERKQLDEVVSEMAALGRLFAEDPSLRRLIASRSIDAREAGRAMEQVLASQGVSDLVRNFIGTAIANRRLADLPSLVAGFAVYVAEKRGVVAADIASAHPLTDTQRAQLTARLAEAGYGRVTIRETVDPSLLGGLTVRIGSKLYDTSLKSRLQRLRHVMKGAA.

Positions 1–16 (MSSAVSASPQAASPQQ) are enriched in low complexity. The tract at residues 1–20 (MSSAVSASPQAASPQQDRTS) is disordered.

Belongs to the ATPase delta chain family. F-type ATPases have 2 components, F(1) - the catalytic core - and F(0) - the membrane proton channel. F(1) has five subunits: alpha(3), beta(3), gamma(1), delta(1), epsilon(1). F(0) has three main subunits: a(1), b(2) and c(10-14). The alpha and beta chains form an alternating ring which encloses part of the gamma chain. F(1) is attached to F(0) by a central stalk formed by the gamma and epsilon chains, while a peripheral stalk is formed by the delta and b chains.

The protein localises to the cell inner membrane. F(1)F(0) ATP synthase produces ATP from ADP in the presence of a proton or sodium gradient. F-type ATPases consist of two structural domains, F(1) containing the extramembraneous catalytic core and F(0) containing the membrane proton channel, linked together by a central stalk and a peripheral stalk. During catalysis, ATP synthesis in the catalytic domain of F(1) is coupled via a rotary mechanism of the central stalk subunits to proton translocation. Its function is as follows. This protein is part of the stalk that links CF(0) to CF(1). It either transmits conformational changes from CF(0) to CF(1) or is implicated in proton conduction. The protein is ATP synthase subunit delta of Acidiphilium cryptum (strain JF-5).